The following is a 526-amino-acid chain: 2-succinyl-5-enolpyruvyl-6-hydroxy-3-cyclohexene-1-carboxylate synthase (526 aa).

This sequence belongs to the TPP enzyme family. MenD subfamily. As to quaternary structure, homodimer. Mg(2+) serves as cofactor. Requires Mn(2+) as cofactor. It depends on thiamine diphosphate as a cofactor.

It carries out the reaction isochorismate + 2-oxoglutarate + H(+) = 5-enolpyruvoyl-6-hydroxy-2-succinyl-cyclohex-3-ene-1-carboxylate + CO2. Its pathway is quinol/quinone metabolism; 1,4-dihydroxy-2-naphthoate biosynthesis; 1,4-dihydroxy-2-naphthoate from chorismate: step 2/7. It participates in quinol/quinone metabolism; menaquinone biosynthesis. Functionally, catalyzes the thiamine diphosphate-dependent decarboxylation of 2-oxoglutarate and the subsequent addition of the resulting succinic semialdehyde-thiamine pyrophosphate anion to isochorismate to yield 2-succinyl-5-enolpyruvyl-6-hydroxy-3-cyclohexene-1-carboxylate (SEPHCHC). This chain is 2-succinyl-5-enolpyruvyl-6-hydroxy-3-cyclohexene-1-carboxylate synthase, found in Bdellovibrio bacteriovorus (strain ATCC 15356 / DSM 50701 / NCIMB 9529 / HD100).